A 125-amino-acid chain; its full sequence is MADLAKIEEQLSSLTLMQAAELVKMLEEKWGVSAAAPVAVAAVGAAAPAAEAVAEKTEFEVVLTAAGDKKVEVIKVVKDITGLGLIEAKKLVDEAPKPIKSNVKKAEADEIKGKLEAAGAKVELK.

This sequence belongs to the bacterial ribosomal protein bL12 family. As to quaternary structure, homodimer. Part of the ribosomal stalk of the 50S ribosomal subunit. Forms a multimeric L10(L12)X complex, where L10 forms an elongated spine to which 2 to 4 L12 dimers bind in a sequential fashion. Binds GTP-bound translation factors.

In terms of biological role, forms part of the ribosomal stalk which helps the ribosome interact with GTP-bound translation factors. Is thus essential for accurate translation. This Rickettsia conorii (strain ATCC VR-613 / Malish 7) protein is Large ribosomal subunit protein bL12.